The chain runs to 195 residues: Holliday junction branch migration complex subunit RuvA (195 aa).

Positions 1-63 (MIASVRGEVI…EDSMTLYGFV (63 aa)) are domain I. The segment at 64 to 142 (DGDARDLFLT…PVSAGGGAAV (79 aa)) is domain II. The segment at 143-150 (GGHAIRGP) is flexible linker. The tract at residues 150–195 (PVVEALVGLGFAAKQAEEATDKVLANDPEATTSSALRAALSMLGKK) is domain III.

Belongs to the RuvA family. In terms of assembly, homotetramer. Forms an RuvA(8)-RuvB(12)-Holliday junction (HJ) complex. HJ DNA is sandwiched between 2 RuvA tetramers; dsDNA enters through RuvA and exits via RuvB. An RuvB hexamer assembles on each DNA strand where it exits the tetramer. Each RuvB hexamer is contacted by two RuvA subunits (via domain III) on 2 adjacent RuvB subunits; this complex drives branch migration. In the full resolvosome a probable DNA-RuvA(4)-RuvB(12)-RuvC(2) complex forms which resolves the HJ.

The protein resides in the cytoplasm. The RuvA-RuvB-RuvC complex processes Holliday junction (HJ) DNA during genetic recombination and DNA repair, while the RuvA-RuvB complex plays an important role in the rescue of blocked DNA replication forks via replication fork reversal (RFR). RuvA specifically binds to HJ cruciform DNA, conferring on it an open structure. The RuvB hexamer acts as an ATP-dependent pump, pulling dsDNA into and through the RuvAB complex. HJ branch migration allows RuvC to scan DNA until it finds its consensus sequence, where it cleaves and resolves the cruciform DNA. In Mycolicibacterium smegmatis (strain ATCC 700084 / mc(2)155) (Mycobacterium smegmatis), this protein is Holliday junction branch migration complex subunit RuvA.